We begin with the raw amino-acid sequence, 707 residues long: Translation initiation factor IF-2 (707 aa).

A compositionally biased stretch (basic and acidic residues) spans 55 to 80 (LAEKPKEEKQKDQKNHEQEAQDKEEK). The interval 55-88 (LAEKPKEEKQKDQKNHEQEAQDKEEKEIEEDSFY) is disordered. In terms of domain architecture, tr-type G spans 209-378 (PRPPIVTVMG…LLVAEMEDLK (170 aa)). Residues 218 to 225 (GHVDHGKT) form a G1 region. Residue 218–225 (GHVDHGKT) participates in GTP binding. The G2 stretch occupies residues 243-247 (GITQH). The segment at 264 to 267 (DTPG) is G3. GTP contacts are provided by residues 264–268 (DTPGH) and 318–321 (NKID). The segment at 318 to 321 (NKID) is G4. The interval 354-356 (SAK) is G5.

It belongs to the TRAFAC class translation factor GTPase superfamily. Classic translation factor GTPase family. IF-2 subfamily.

It localises to the cytoplasm. In terms of biological role, one of the essential components for the initiation of protein synthesis. Protects formylmethionyl-tRNA from spontaneous hydrolysis and promotes its binding to the 30S ribosomal subunits. Also involved in the hydrolysis of GTP during the formation of the 70S ribosomal complex. The protein is Translation initiation factor IF-2 of Caldanaerobacter subterraneus subsp. tengcongensis (strain DSM 15242 / JCM 11007 / NBRC 100824 / MB4) (Thermoanaerobacter tengcongensis).